The sequence spans 352 residues: Protein MGF 360-16R (352 aa).

The protein belongs to the asfivirus MGF 360 family.

In terms of biological role, plays a role in virus cell tropism, and may be required for efficient virus replication in macrophages. The protein is Protein MGF 360-16R of African swine fever virus (isolate Tick/South Africa/Pretoriuskop Pr4/1996) (ASFV).